Here is a 161-residue protein sequence, read N- to C-terminus: ATP synthase subunit b 1 (161 aa).

A helical transmembrane segment spans residues 5-25 (PETWVAIAFLLLMGVFAYVGV).

It belongs to the ATPase B chain family. F-type ATPases have 2 components, F(1) - the catalytic core - and F(0) - the membrane proton channel. F(1) has five subunits: alpha(3), beta(3), gamma(1), delta(1), epsilon(1). F(0) has three main subunits: a(1), b(2) and c(10-14). The alpha and beta chains form an alternating ring which encloses part of the gamma chain. F(1) is attached to F(0) by a central stalk formed by the gamma and epsilon chains, while a peripheral stalk is formed by the delta and b chains.

It localises to the cell inner membrane. Functionally, f(1)F(0) ATP synthase produces ATP from ADP in the presence of a proton or sodium gradient. F-type ATPases consist of two structural domains, F(1) containing the extramembraneous catalytic core and F(0) containing the membrane proton channel, linked together by a central stalk and a peripheral stalk. During catalysis, ATP synthesis in the catalytic domain of F(1) is coupled via a rotary mechanism of the central stalk subunits to proton translocation. Its function is as follows. Component of the F(0) channel, it forms part of the peripheral stalk, linking F(1) to F(0). The chain is ATP synthase subunit b 1 from Nitrobacter winogradskyi (strain ATCC 25391 / DSM 10237 / CIP 104748 / NCIMB 11846 / Nb-255).